The primary structure comprises 348 residues: N-acetyl-gamma-glutamyl-phosphate reductase (348 aa).

Residue Cys150 is part of the active site.

It belongs to the NAGSA dehydrogenase family. Type 1 subfamily.

It localises to the cytoplasm. It carries out the reaction N-acetyl-L-glutamate 5-semialdehyde + phosphate + NADP(+) = N-acetyl-L-glutamyl 5-phosphate + NADPH + H(+). It participates in amino-acid biosynthesis; L-arginine biosynthesis; N(2)-acetyl-L-ornithine from L-glutamate: step 3/4. Catalyzes the NADPH-dependent reduction of N-acetyl-5-glutamyl phosphate to yield N-acetyl-L-glutamate 5-semialdehyde. The sequence is that of N-acetyl-gamma-glutamyl-phosphate reductase from Symbiobacterium thermophilum (strain DSM 24528 / JCM 14929 / IAM 14863 / T).